Reading from the N-terminus, the 181-residue chain is Endoglucanase (181 aa).

Cysteine 4 and cysteine 16 form a disulfide bridge. Aspartate 24 (nucleophile) is an active-site residue. Cystine bridges form between cysteine 30/cysteine 69, cysteine 32/cysteine 176, cysteine 65/cysteine 178, cysteine 72/cysteine 157, and cysteine 103/cysteine 113. Aspartate 132 serves as the catalytic Proton donor.

As to expression, digestive gland.

The enzyme catalyses Endohydrolysis of (1-&gt;4)-beta-D-glucosidic linkages in cellulose, lichenin and cereal beta-D-glucans.. Functionally, active towards the soluble carboxymethylcellulose (CMC). Possesses expansin activity too. This chain is Endoglucanase, found in Mytilus edulis (Blue mussel).